A 579-amino-acid chain; its full sequence is Ribonucleoside-diphosphate reductase small chain (579 aa).

3 residues coordinate Fe cation: Asp130, Glu160, and His163. Tyr167 is an active-site residue. Fe cation-binding residues include Glu225, Glu258, and His261. In terms of domain architecture, Fido spans 435–579 (DMTWTLKDVH…VSVFVDQFYR (145 aa)).

This sequence belongs to the ribonucleoside diphosphate reductase small chain family. Heterotetramer composed of a homodimer of the large subunit (R1) and a homodimer of the small subunit (R2). Larger multisubunit protein complex are also active, composed of (R1)n(R2)n. It depends on Fe cation as a cofactor.

The catalysed reaction is a 2'-deoxyribonucleoside 5'-diphosphate + [thioredoxin]-disulfide + H2O = a ribonucleoside 5'-diphosphate + [thioredoxin]-dithiol. Functionally, ribonucleoside-diphosphate reductase holoenzyme provides the precursors necessary for viral DNA synthesis. Allows virus growth in non-dividing cells. Catalyzes the biosynthesis of deoxyribonucleotides from the corresponding ribonucleotides. This chain is Ribonucleoside-diphosphate reductase small chain, found in Magallana gigas (Pacific oyster).